We begin with the raw amino-acid sequence, 158 residues long: Cyclic pyranopterin monophosphate synthase (158 aa).

Residues 76–78 (LCH) and 114–115 (ME) each bind substrate. Aspartate 129 is an active-site residue.

Belongs to the MoaC family. Homohexamer; trimer of dimers.

It catalyses the reaction (8S)-3',8-cyclo-7,8-dihydroguanosine 5'-triphosphate = cyclic pyranopterin phosphate + diphosphate. It functions in the pathway cofactor biosynthesis; molybdopterin biosynthesis. Catalyzes the conversion of (8S)-3',8-cyclo-7,8-dihydroguanosine 5'-triphosphate to cyclic pyranopterin monophosphate (cPMP). The protein is Cyclic pyranopterin monophosphate synthase of Shewanella woodyi (strain ATCC 51908 / MS32).